We begin with the raw amino-acid sequence, 624 residues long: tRNA uridine 5-carboxymethylaminomethyl modification enzyme MnmG (624 aa).

FAD contacts are provided by residues 13–18, V125, and S180; that span reads GGGHAG. 273–287 is an NAD(+) binding site; it reads GPRYCPSIEDKIVRF. Q370 provides a ligand contact to FAD.

This sequence belongs to the MnmG family. Homodimer. Heterotetramer of two MnmE and two MnmG subunits. FAD serves as cofactor.

It localises to the cytoplasm. Its function is as follows. NAD-binding protein involved in the addition of a carboxymethylaminomethyl (cmnm) group at the wobble position (U34) of certain tRNAs, forming tRNA-cmnm(5)s(2)U34. The polypeptide is tRNA uridine 5-carboxymethylaminomethyl modification enzyme MnmG (Legionella pneumophila subsp. pneumophila (strain Philadelphia 1 / ATCC 33152 / DSM 7513)).